Reading from the N-terminus, the 603-residue chain is Proline--tRNA ligase (603 aa).

This sequence belongs to the class-II aminoacyl-tRNA synthetase family. ProS type 1 subfamily. In terms of assembly, homodimer.

It is found in the cytoplasm. The enzyme catalyses tRNA(Pro) + L-proline + ATP = L-prolyl-tRNA(Pro) + AMP + diphosphate. In terms of biological role, catalyzes the attachment of proline to tRNA(Pro) in a two-step reaction: proline is first activated by ATP to form Pro-AMP and then transferred to the acceptor end of tRNA(Pro). As ProRS can inadvertently accommodate and process non-cognate amino acids such as alanine and cysteine, to avoid such errors it has two additional distinct editing activities against alanine. One activity is designated as 'pretransfer' editing and involves the tRNA(Pro)-independent hydrolysis of activated Ala-AMP. The other activity is designated 'posttransfer' editing and involves deacylation of mischarged Ala-tRNA(Pro). The misacylated Cys-tRNA(Pro) is not edited by ProRS. The chain is Proline--tRNA ligase from Microcystis aeruginosa (strain NIES-843 / IAM M-2473).